Here is a 497-residue protein sequence, read N- to C-terminus: Glutamyl-tRNA(Gln) amidotransferase subunit A (497 aa).

Catalysis depends on charge relay system residues Lys80 and Ser155. Ser179 (acyl-ester intermediate) is an active-site residue.

The protein belongs to the amidase family. GatA subfamily. Heterotrimer of A, B and C subunits.

It carries out the reaction L-glutamyl-tRNA(Gln) + L-glutamine + ATP + H2O = L-glutaminyl-tRNA(Gln) + L-glutamate + ADP + phosphate + H(+). Allows the formation of correctly charged Gln-tRNA(Gln) through the transamidation of misacylated Glu-tRNA(Gln) in organisms which lack glutaminyl-tRNA synthetase. The reaction takes place in the presence of glutamine and ATP through an activated gamma-phospho-Glu-tRNA(Gln). This is Glutamyl-tRNA(Gln) amidotransferase subunit A (gatA) from Streptomyces coelicolor (strain ATCC BAA-471 / A3(2) / M145).